The following is a 336-amino-acid chain: MVGVQICQGMTSEILFFSLQPQFSNMMNKNSRLHIDSNIRNTFFTEIGIGVSANSLLLLFNIFKFIHGQRSRLTDLPIGLLSLINLLMLLIMACIATDIFISCRRWDDIICKSLLYLYRTFRGLSLSTTCLLSVLQAIILSPRSSCLAKYKHKPPHHIFCAMLFLSVLYMFISSHLLLSIIATPNLTTNDFIHVSQSCSILPMSYLMQSMFSTLLAIRNVFLISLIVLSTWYMVALLCRHRKQTRHLQDTSLSRKASPEQRATRSILMLRSLFVLMSIFDSIVSCSRTMYLNDPTSYSIQLLVVHIYATVSPFVFMITEKHIVNYLKSMYVRVLNV.

Residues 1–42 lie on the Extracellular side of the membrane; the sequence is MVGVQICQGMTSEILFFSLQPQFSNMMNKNSRLHIDSNIRNT. Residues 43–63 form a helical membrane-spanning segment; the sequence is FFTEIGIGVSANSLLLLFNIF. At 64-75 the chain is on the cytoplasmic side; that stretch reads KFIHGQRSRLTD. The chain crosses the membrane as a helical span at residues 76 to 96; it reads LPIGLLSLINLLMLLIMACIA. The Extracellular portion of the chain corresponds to 97 to 120; that stretch reads TDIFISCRRWDDIICKSLLYLYRT. An intrachain disulfide couples Cys111 to Cys198. The helical transmembrane segment at 121–140 threads the bilayer; the sequence is FRGLSLSTTCLLSVLQAIIL. Topologically, residues 141 to 157 are cytoplasmic; the sequence is SPRSSCLAKYKHKPPHH. Residues 158-178 traverse the membrane as a helical segment; that stretch reads IFCAMLFLSVLYMFISSHLLL. The Extracellular portion of the chain corresponds to 179-213; it reads SIIATPNLTTNDFIHVSQSCSILPMSYLMQSMFST. A glycan (N-linked (GlcNAc...) asparagine) is linked at Asn185. Residues 214 to 234 form a helical membrane-spanning segment; the sequence is LLAIRNVFLISLIVLSTWYMV. Topologically, residues 235–264 are cytoplasmic; it reads ALLCRHRKQTRHLQDTSLSRKASPEQRATR. Residues 265 to 285 form a helical membrane-spanning segment; it reads SILMLRSLFVLMSIFDSIVSC. The Extracellular portion of the chain corresponds to 286–296; sequence SRTMYLNDPTS. Residues 297 to 317 traverse the membrane as a helical segment; it reads YSIQLLVVHIYATVSPFVFMI. The Cytoplasmic portion of the chain corresponds to 318 to 336; that stretch reads TEKHIVNYLKSMYVRVLNV.

Belongs to the G-protein coupled receptor 1 family. In terms of tissue distribution, expressed in 1-4% of neurons of the vomeronasal organ. Only one pheromone receptor gene may be expressed in a particular neuron. Not expressed in the main olfactory epithelium.

Its subcellular location is the cell membrane. Functionally, putative pheromone receptor implicated in the regulation of social as well as reproductive behavior. In Rattus norvegicus (Rat), this protein is Vomeronasal type-1 receptor 102 (Vom1r102).